The chain runs to 140 residues: uncharacterized protein (140 aa).

A VOC domain is found at 4-127 (TLTHLALHVP…AGNYVEFSYG (124 aa)).

This is an uncharacterized protein from Pseudomonas aeruginosa (strain ATCC 15692 / DSM 22644 / CIP 104116 / JCM 14847 / LMG 12228 / 1C / PRS 101 / PAO1).